Here is a 351-residue protein sequence, read N- to C-terminus: MFTKTFSNNYMTSSQSAYCNLQQYHDSRVCLLKCCRVQKVDPYFPRIALNSATSYPTVSGTVSLPKAETVEPDLWIKSFKGNEDPLLSDGSHTGVNQLGGVFVNGRPLPDTIRAQIVEMSQHGTRPCDISRQLKVSHGCVSKILGRYYSTGSVRPGVIGGSKPKVATPRVVECIAGYKRANPTMFAWEIRQKLIEDQICGEENVPSVSSINRIVRNKSFMAQLATPTSVTPSVARPSSATSQNQRSPPRGVQQHMQQSTSVQQLQQFQLTSAATVNSLISRPAFAIPGTTHSINGLLGTFPHSSLLDDKFTNLSTHSADMSLVYPTGLVGEHDWAMRTPMVILPQNYCGQL.

Positions 91–217 (SHTGVNQLGG…SSINRIVRNK (127 aa)) form a DNA-binding region, paired. The interval 94–150 (GVNQLGGVFVNGRPLPDTIRAQIVEMSQHGTRPCDISRQLKVSHGCVSKILGRYYST) is PAI subdomain. Residues 169–217 (RVVECIAGYKRANPTMFAWEIRQKLIEDQICGEENVPSVSSINRIVRNK) form an RED subdomain region. Positions 226–246 (PTSVTPSVARPSSATSQNQRS) are enriched in polar residues. The segment at 226 to 258 (PTSVTPSVARPSSATSQNQRSPPRGVQQHMQQS) is disordered.

The protein resides in the nucleus. Its subcellular location is the chromosome. Functionally, transcription factor. Involved in negatively modulating apoptosis in germline and somatic cells, acting in partial redundancy with transcription factor egl-38/PAX5, probably by directly regulating transcription of apoptosis regulator ced-9. May bind to the DNA sequence motif 5'-GTAACG-3' in regulatory elements. The chain is Paired box protein 2 homolog from Caenorhabditis elegans.